Reading from the N-terminus, the 126-residue chain is Large ribosomal subunit protein uL22 (126 aa).

Belongs to the universal ribosomal protein uL22 family. Part of the 50S ribosomal subunit.

In terms of biological role, this protein binds specifically to 23S rRNA; its binding is stimulated by other ribosomal proteins, e.g. L4, L17, and L20. It is important during the early stages of 50S assembly. It makes multiple contacts with different domains of the 23S rRNA in the assembled 50S subunit and ribosome. Its function is as follows. The globular domain of the protein is located near the polypeptide exit tunnel on the outside of the subunit, while an extended beta-hairpin is found that lines the wall of the exit tunnel in the center of the 70S ribosome. In Caulobacter vibrioides (strain ATCC 19089 / CIP 103742 / CB 15) (Caulobacter crescentus), this protein is Large ribosomal subunit protein uL22.